The sequence spans 275 residues: Uroporphyrinogen-III synthase (275 aa).

The protein belongs to the uroporphyrinogen-III synthase family.

The enzyme catalyses hydroxymethylbilane = uroporphyrinogen III + H2O. Its pathway is porphyrin-containing compound metabolism; protoporphyrin-IX biosynthesis; coproporphyrinogen-III from 5-aminolevulinate: step 3/4. Its function is as follows. Catalyzes cyclization of the linear tetrapyrrole, hydroxymethylbilane, to the macrocyclic uroporphyrinogen III, the fourth step in the heme biosynthetic pathway. In Saccharomyces cerevisiae (strain ATCC 204508 / S288c) (Baker's yeast), this protein is Uroporphyrinogen-III synthase.